The sequence spans 112 residues: Nitrogen regulatory protein GlnK2 (112 aa).

ADP-binding positions include Thr-29, 38–39 (QQ), Val-64, and 87–90 (GDGK). Residues Thr-29, 38 to 39 (QQ), Val-64, 87 to 90 (GDGK), and 101 to 103 (RIR) each bind ATP.

This sequence belongs to the P(II) protein family. In terms of assembly, homotrimer. Interacts and forms a complex with Amt2.

The protein localises to the cytoplasm. With respect to regulation, binding of adenosine nucleotides results in distinct, cooperative behavior for ATP and ADP. GlnK2 is completely insensitive to 2-oxoglutarate at a low level of intracellular nitrogen. Functionally, involved in the regulation of nitrogen metabolism. Regulates the activity of its targets by protein-protein interaction in response to the nitrogen status of the cell. Regulates the activity of the ammonia channel Amt2 via direct interaction. The polypeptide is Nitrogen regulatory protein GlnK2 (Archaeoglobus fulgidus (strain ATCC 49558 / DSM 4304 / JCM 9628 / NBRC 100126 / VC-16)).